Consider the following 104-residue polypeptide: Cysteine-rich and transmembrane domain-containing protein 1 (104 aa).

Pro residues-rich tracts occupy residues 1-25 (MNPE…PQQP) and 33-47 (GAPP…PPQG). A disordered region spans residues 1 to 47 (MNPENPPPYPGPGPTAPYPPYPQQPMGPMGPMGAPPPQGYPYPPPQG). Residues 81 to 98 (LGPSTCLTACWTALCCCC) form a helical membrane-spanning segment.

This sequence belongs to the CYSTM1 family.

It localises to the membrane. The sequence is that of Cysteine-rich and transmembrane domain-containing protein 1 (Cystm1) from Mus musculus (Mouse).